We begin with the raw amino-acid sequence, 232 residues long: Dephospho-CoA kinase (232 aa).

The region spanning 3 to 206 (IVGLTGGIAS…RPLTWIEFWR (204 aa)) is the DPCK domain. 8 to 15 (GGIASGKS) contacts ATP.

The protein belongs to the CoaE family.

Its subcellular location is the peroxisome. It catalyses the reaction 3'-dephospho-CoA + ATP = ADP + CoA + H(+). It functions in the pathway cofactor biosynthesis; coenzyme A biosynthesis; CoA from (R)-pantothenate: step 5/5. Its function is as follows. Catalyzes the phosphorylation of the 3'-hydroxyl group of dephosphocoenzyme A to form coenzyme A. This is Dephospho-CoA kinase from Arabidopsis thaliana (Mouse-ear cress).